The chain runs to 356 residues: Glutamine synthetase cytosolic isozyme 1-1 (356 aa).

The GS beta-grasp domain maps to 19-99; that stretch reads IIAEYIWIGG…VMCDCYTPAG (81 aa). Positions 106-356 constitute a GS catalytic domain; it reads KRHNAAKIFS…IAETTIIWKP (251 aa).

This sequence belongs to the glutamine synthetase family. In terms of assembly, homooctamer. Highly expressed in leaf blades, at intermediate levels in spikelets (rice flower) and at lower levels in roots.

It is found in the cytoplasm. It catalyses the reaction L-glutamate + NH4(+) + ATP = L-glutamine + ADP + phosphate + H(+). High-affinity glutamine synthetase involved in ammonium assimilation. Seems to be a major component of the cytosolic glutamine synthetic pathway in leaf blades. Plays an important role in maintaining carbon and nitrogen metabolic balance during ammonium assimilation in shoots and roots, thus controlling plant growth and development. Plays an important role in maintaining broad range of metabolites and transcripts involved in the maintenance of plant metabolic homeostasis and development of plastid in roots. In Oryza sativa subsp. japonica (Rice), this protein is Glutamine synthetase cytosolic isozyme 1-1.